We begin with the raw amino-acid sequence, 43 residues long: Delta/kappa-actitoxin-Avd4a (43 aa).

Disulfide bonds link cysteine 4–cysteine 39, cysteine 6–cysteine 32, and cysteine 22–cysteine 40.

It belongs to the sea anemone type 3 (BDS) potassium channel toxin family.

It localises to the secreted. The protein localises to the nematocyst. Functionally, acts as a gating modifier on both Kv and Nav ion channels, and also acts on blood pressure. Voltage-dependently inhibits voltage-gated potassium channels Kv3 (Kv3.1/KCNC1, Kv3.2/KCNC2 and Kv3.4/KCNC4) and slows inactivation of the voltage-gated sodium channel Nav1.7/SCN9A. Inhibits all Kv3.1, Kv3.2 and Kv3.4 by about 50% when tested at a voltage of +40 mV (45%, 48% and 56%, respectively). May act by binding residues in voltage-sensing domains S3b and S4 of Kv3. On sodium channel, tests have been done on human Nav1.7/SCN9A (expressed in HEK293 cells) (EC(50)=3 nM) and rat SCG neurons that mostly carry Nav1.7 channels (EC(50)=300 nM). This toxin also reduces blood pressure. This Anemonia sulcata (Mediterranean snakelocks sea anemone) protein is Delta/kappa-actitoxin-Avd4a.